Consider the following 183-residue polypeptide: Somatotropin (183 aa).

Histidine 19 provides a ligand contact to Zn(2+). The tract at residues 38-67 (EEQRHSHKSSPSAFCQSETIPAPTGKEDAQ) is disordered. A compositionally biased stretch (polar residues) spans 46–56 (SSPSAFCQSET). A disulfide bridge connects residues cysteine 52 and cysteine 156. Glutamate 165 contacts Zn(2+). A disulfide bridge connects residues cysteine 173 and cysteine 181.

This sequence belongs to the somatotropin/prolactin family.

Its subcellular location is the secreted. Growth hormone plays an important role in growth control and is involved in the regulation of several anabolic processes. Implicated as an osmoregulatory substance important for seawater adaptation. In Prionace glauca (Blue shark), this protein is Somatotropin (gh).